The primary structure comprises 141 residues: Large ribosomal subunit protein uL11 (141 aa).

This sequence belongs to the universal ribosomal protein uL11 family. In terms of assembly, part of the ribosomal stalk of the 50S ribosomal subunit. Interacts with L10 and the large rRNA to form the base of the stalk. L10 forms an elongated spine to which L12 dimers bind in a sequential fashion forming a multimeric L10(L12)X complex.

Its function is as follows. Forms part of the ribosomal stalk which helps the ribosome interact with GTP-bound translation factors. The polypeptide is Large ribosomal subunit protein uL11 (Acidianus ambivalens (Desulfurolobus ambivalens)).